A 92-amino-acid chain; its full sequence is MVYVLIAYDISNDSKRLKAAQKLLQMGFARVQKSVYIAKGGRSLAKEAYRALQRLADSGKDKIMVMVIPGDSVRDAYGLGGSLEDGKRVVVV.

Residue Asp9 coordinates Mg(2+).

Belongs to the CRISPR-associated endoribonuclease Cas2 protein family. Homodimer, forms a heterotetramer with a Cas1 homodimer. Mg(2+) is required as a cofactor.

Functionally, CRISPR (clustered regularly interspaced short palindromic repeat), is an adaptive immune system that provides protection against mobile genetic elements (viruses, transposable elements and conjugative plasmids). CRISPR clusters contain sequences complementary to antecedent mobile elements and target invading nucleic acids. CRISPR clusters are transcribed and processed into CRISPR RNA (crRNA). Functions as a ssRNA-specific endoribonuclease. Involved in the integration of spacer DNA into the CRISPR cassette. The sequence is that of CRISPR-associated endoribonuclease Cas2 from Aeropyrum pernix (strain ATCC 700893 / DSM 11879 / JCM 9820 / NBRC 100138 / K1).